The chain runs to 354 residues: Endo-1,4-beta-xylanase 1 (354 aa).

The region spanning 19–339 (SGLDAAMKAA…KPSYTSSLNT (321 aa)) is the GH10 domain. Asn-117 is a glycosylation site (N-linked (GlcNAc...) asparagine). Glu-147 (proton donor) is an active-site residue. Glu-261 functions as the Nucleophile in the catalytic mechanism. Cysteines 289 and 295 form a disulfide.

It belongs to the glycosyl hydrolase 10 (cellulase F) family.

Its subcellular location is the secreted. It carries out the reaction Endohydrolysis of (1-&gt;4)-beta-D-xylosidic linkages in xylans.. Its pathway is glycan degradation; xylan degradation. Its function is as follows. Endo-1,4-beta-xylanase involved in the hydrolysis of xylan, a major structural heterogeneous polysaccharide found in plant biomass representing the second most abundant polysaccharide in the biosphere, after cellulose. Plays an important role in causing fusarium head blight (FHB) on cereal crops. The polypeptide is Endo-1,4-beta-xylanase 1 (XYL1) (Gibberella zeae (strain ATCC MYA-4620 / CBS 123657 / FGSC 9075 / NRRL 31084 / PH-1) (Wheat head blight fungus)).